The chain runs to 1020 residues: MSRVISRSTPGGTCIVSKDDFLKSFEEVPKMEISSPSDFKEKLDQTIETLSKGQEDWNKRMNKLKQIRSMVVHGEDVIGREQLLSQLVRLTDCLDLSVKDLRSQILREAAITCGFLFKRFGTDVRQIAERCLPSAFAQVAVSTKVMATCGAVLTLFIVEFIQTKQIFTCIASYSTSKDKNQRRQLCALLEIVLEHWNEKIKRTVLPQIGELIKAAICDADPETRVAGRKAFSKLDALHSTEADKLFASVDSSKQKMLRASDAASSSTSINSERGTAPFRSKLSAGSIGGIRNAPNISSKFLAQRSASAIDTKQVTRMATSVSRTPNIRPMTTRTLSKIDTSPGGSKFARPTVGALGSRTSSNLRARGSVPTSQPGSRNGSPPRRPSATEAFPAEMQRVKSNLGSNSFVSSLSAEEATKLQKAMNTAKESLRQPSRNDDDEFLLPKRPTPQKATPQKSALDTSRVEEVIRACSSTSANEKREGIKMLAGIVSEPNLSNAEIKSLGAVLNRLLGESTNQIVLESISSFVKTHHPRLSDWLKLGLGKLFAKKGAEMTLNSKKQISTTISCILSSFDPTLQLKSTCELVCDPIHLMSPKSRVVLLEYLNELLGKYMERGSSFNTKEMKATILKMFSWMADQRNEQLITPHGEKVLCSLFALNNADFSALFNDFNPDYRDWAYKVLQSHGHDQHVPQQDAVSEEACVRATISTTAAQIEDFVVSRNLDMTPVKSPSTRAISSGFKRVDAEPLRPLSSEMNSQHRDEELSFNESFDRLKLNSTTHLIDDTSEQSKYVASKLAQISGDMGAQQYEGLLSIQTMLCEGSFTLWEQNFAKLLIAVFDVLSKSESDANKKVALRVLTKMCTSQASRLFDSTEMAICKVLDAAVNSQDGTMNVTADDCLKTLATHLPLAKVVNISQLILNEEKAQEPKASLVLKMMTRLFEGLQADELSPVVDDLAPCVIKSYDSPSSAVRKTAVYCLVAMVNKLGMKTMEPHLQNLSSGKLNLVQVYVNRAMSSSSHSHV.

The segment covering 259 to 271 has biased composition (low complexity); it reads ASDAASSSTSINS. Disordered regions lie at residues 259-280, 329-387, and 419-461; these read ASDAASSSTSINSERGTAPFRS, PMTT…RPSA, and LQKA…ALDT. The segment covering 329 to 343 has biased composition (polar residues); the sequence is PMTTRTLSKIDTSPG. Positions 372–381 are enriched in low complexity; sequence SQPGSRNGSP. The span at 450-460 shows a compositional bias: polar residues; it reads QKATPQKSALD. The HEAT repeat unit spans residues 954-992; it reads LAPCVIKSYDSPSSAVRKTAVYCLVAMVNKLGMKTMEPH.

Belongs to the CLASP family. Interacts with hcp-1 and hcp-2.

The protein resides in the cytoplasm. Its subcellular location is the cytoskeleton. It is found in the microtubule organizing center. It localises to the centrosome. The protein localises to the chromosome. The protein resides in the centromere. Its subcellular location is the kinetochore. It is found in the spindle. Its function is as follows. Probable microtubule plus-end tracking protein that promotes the stabilization of dynamic microtubules. Required for the formation of mitotic and meiotic spindles. Specifically promotes the polymerization of kinetochore-bound microtubules. Also required for cytoplasmic streaming. Essential for embryonic development. In Caenorhabditis elegans, this protein is Protein CLASP-2 (cls-2).